A 284-amino-acid chain; its full sequence is ATP synthase subunit beta, chloroplastic (284 aa).

It belongs to the ATPase alpha/beta chains family. F-type ATPases have 2 components, CF(1) - the catalytic core - and CF(0) - the membrane proton channel. CF(1) has five subunits: alpha(3), beta(3), gamma(1), delta(1), epsilon(1). CF(0) has four main subunits: a(1), b(1), b'(1) and c(9-12).

It is found in the plastid. It localises to the chloroplast thylakoid membrane. It carries out the reaction ATP + H2O + 4 H(+)(in) = ADP + phosphate + 5 H(+)(out). Functionally, produces ATP from ADP in the presence of a proton gradient across the membrane. The catalytic sites are hosted primarily by the beta subunits. The polypeptide is ATP synthase subunit beta, chloroplastic (atpB) (Asplenium nidus (Bird's nest fern)).